The sequence spans 416 residues: Gamma-glutamyl phosphate reductase (416 aa).

Belongs to the gamma-glutamyl phosphate reductase family.

Its subcellular location is the cytoplasm. It catalyses the reaction L-glutamate 5-semialdehyde + phosphate + NADP(+) = L-glutamyl 5-phosphate + NADPH + H(+). Its pathway is amino-acid biosynthesis; L-proline biosynthesis; L-glutamate 5-semialdehyde from L-glutamate: step 2/2. Functionally, catalyzes the NADPH-dependent reduction of L-glutamate 5-phosphate into L-glutamate 5-semialdehyde and phosphate. The product spontaneously undergoes cyclization to form 1-pyrroline-5-carboxylate. This is Gamma-glutamyl phosphate reductase from Streptococcus uberis (strain ATCC BAA-854 / 0140J).